A 354-amino-acid polypeptide reads, in one-letter code: Histidinol-phosphate aminotransferase (354 aa).

Over residues 1-11 (MKSFLSDKAKS) the composition is skewed to basic and acidic residues. A disordered region spans residues 1–33 (MKSFLSDKAKSIEPYTPGEQPKDKNYIKLNTNE). Lys211 bears the N6-(pyridoxal phosphate)lysine mark.

The protein belongs to the class-II pyridoxal-phosphate-dependent aminotransferase family. Histidinol-phosphate aminotransferase subfamily. In terms of assembly, homodimer. The cofactor is pyridoxal 5'-phosphate.

The enzyme catalyses L-histidinol phosphate + 2-oxoglutarate = 3-(imidazol-4-yl)-2-oxopropyl phosphate + L-glutamate. The protein operates within amino-acid biosynthesis; L-histidine biosynthesis; L-histidine from 5-phospho-alpha-D-ribose 1-diphosphate: step 7/9. The protein is Histidinol-phosphate aminotransferase of Brachyspira hyodysenteriae (strain ATCC 49526 / WA1).